We begin with the raw amino-acid sequence, 493 residues long: MTDVRVRFCPSPTGTPHVGLVRTALFNWAYARHTGGKLIFRIEDTDAARDSEESYAALLDAMNWLGLNWDEGVEVGGPHEPYRQSQRSDIYQDVLKKLIDAGEVYPAYSTAEEVEERHRAAGRDPKLGYDNYDRTLTEDEITAFEAEGRKPVWRLRMPEQDWKWNDLVRGEVEFKSFTQPDFVVARSNGQPLYTLVNPVDDALMEITHVLRGEDLLPSTPRQIALYEALKRIGVAKQTPVFGHLPFVMGEGNKKLSKRDPQSDLFQHRTNGIIPEGMLNYLGLLGWSLSADQDIFTVEEFVANFDIADVLGNPARFDQKKLEAINADHIRLLPAGEFEERLRAHLSEFTDFPEDYPAEKFSFAAELVQTRIKTLAEGYDLLKFLVTADEDLVLDEKAAKKNLKEAAIEPLDAGINALEAVAEWTTPNIEAALTRALIEELGLKPRVAYGALRVAISGAAVSPPLFESMELLGRESTLTRLRAARAATPYQAAE.

Residues 10–20 (PSPTGTPHVGL) carry the 'HIGH' region motif. The 'KMSKS' region motif lies at 254–258 (KLSKR). Lys-257 serves as a coordination point for ATP.

The protein belongs to the class-I aminoacyl-tRNA synthetase family. Glutamate--tRNA ligase type 1 subfamily. Monomer.

The protein localises to the cytoplasm. The enzyme catalyses tRNA(Glu) + L-glutamate + ATP = L-glutamyl-tRNA(Glu) + AMP + diphosphate. Functionally, catalyzes the attachment of glutamate to tRNA(Glu) in a two-step reaction: glutamate is first activated by ATP to form Glu-AMP and then transferred to the acceptor end of tRNA(Glu). The sequence is that of Glutamate--tRNA ligase from Corynebacterium efficiens (strain DSM 44549 / YS-314 / AJ 12310 / JCM 11189 / NBRC 100395).